Consider the following 362-residue polypeptide: MGMLVPTALAARLLSLFQQQLGSLWSGLAILFCWLRIALGWLDPGKEQPQVRGEPEDTQETQEDGNSTQPTTPVSVNYHFTRQCNYKCGFCFHTAKTSFVLPLEEAKRGLLLLKQAGLEKINFSGGEPFLQDRGEYLGKLVRFCKEELALPSVSIVSNGSLIRERWFKDYGEYLDILAISCDSFDEQVNALIGRGQGKKNHVENLQKLRRWCRDYKVAFKINSVINRFNVDEDMNEHIKALSPVRWKVFQCLLIEGENSGEDALREAERFLISNEEFETFLERHKEVSCLVPESNQKMKDSYLILDEYMRFLNCTGGRKDPSKSILDVGVEEAIKFSGFDEKMFLKRGGKYVWSKADLKLDW.

The segment at 47-73 is disordered; the sequence is EQPQVRGEPEDTQETQEDGNSTQPTTP. A compositionally biased stretch (polar residues) spans 64 to 73; sequence DGNSTQPTTP. The 221-residue stretch at 70–290 folds into the Radical SAM core domain; it reads PTTPVSVNYH…LERHKEVSCL (221 aa). Residues Cys-84, Cys-88, and Cys-91 each coordinate [4Fe-4S] cluster. N6-acetyllysine is present on Lys-198. Lys-207 participates in a covalent cross-link: Glycyl lysine isopeptide (Lys-Gly) (interchain with G-Cter in ubiquitin).

The protein belongs to the radical SAM superfamily. RSAD2 family. In terms of assembly, homodimer. Interacts with IRAK1 and TRAF6. Interacts with FPPS. Interacts with HADHB. Interacts (via C-terminus) with VAPA/VAP33 (via C-terminus). [4Fe-4S] cluster serves as cofactor. Acetylated by HAT1. HAT1-mediated acetylation of Lys-198 in turn recruits UBE4A that stimulates RSAD2 polyubiquitination leading to proteasomal degradation. Post-translationally, 'Lys-6'-linked polyubiquitination at Lys-207 leads to RSAD2 protein degradation. As to expression, expressed at higher levels in atherosclerotic arteries than in normal arteries.

It is found in the endoplasmic reticulum membrane. The protein resides in the golgi apparatus. The protein localises to the endoplasmic reticulum. It localises to the lipid droplet. Its subcellular location is the mitochondrion. It is found in the mitochondrion inner membrane. The protein resides in the mitochondrion outer membrane. It carries out the reaction CTP + AH2 + S-adenosyl-L-methionine = 3'-deoxy-3',4'-didehydro-CTP + 5'-deoxyadenosine + L-methionine + A + H2O + H(+). With respect to regulation, IRAK1 and TRAF6 synergistically activate RSAD2 increasing its activity with CTP as substrate about 10-fold. Functionally, interferon-inducible antiviral protein which plays a major role in the cell antiviral state induced by type I and type II interferon. Catalyzes the conversion of cytidine triphosphate (CTP) to 3'-deoxy-3',4'-didehydro-CTP (ddhCTP) via a SAM-dependent radical mechanism. In turn, ddhCTP acts as a chain terminator for the RNA-dependent RNA polymerases from multiple viruses and directly inhibits viral replication. Therefore, inhibits a wide range of DNA and RNA viruses. Also promotes TLR7 and TLR9-dependent production of IFN-beta production in plasmacytoid dendritic cells (pDCs) by facilitating 'Lys-63'-linked ubiquitination of IRAK1 by TRAF6. Plays a role in CD4+ T-cells activation and differentiation. Facilitates T-cell receptor (TCR)-mediated GATA3 activation and optimal T-helper 2 (Th2) cytokine production by modulating NFKB1 and JUNB activities. Can inhibit secretion of soluble proteins. This Mus musculus (Mouse) protein is S-adenosylmethionine-dependent nucleotide dehydratase RSAD2.